Here is a 157-residue protein sequence, read N- to C-terminus: MARVKRAVNAHKKRRVILERAKGYRGQRSRLYRKAKEQLLHSFVYSYGDRKKKKGDFRRLWIQRINAASRANGLTYNRLIQGLKAAEVEVDRRMLAELAVSDANAFAALVQVAKDSLPADTSAPAVSAEAAPKAKAAKKPAAKKAAAKKPVAEEAAK.

The disordered stretch occupies residues 121 to 157 (TSAPAVSAEAAPKAKAAKKPAAKKAAAKKPVAEEAAK). Residues 122-134 (SAPAVSAEAAPKA) are compositionally biased toward low complexity. The segment covering 135-147 (KAAKKPAAKKAAA) has biased composition (basic residues).

It belongs to the bacterial ribosomal protein bL20 family.

Functionally, binds directly to 23S ribosomal RNA and is necessary for the in vitro assembly process of the 50S ribosomal subunit. It is not involved in the protein synthesizing functions of that subunit. The polypeptide is Large ribosomal subunit protein bL20 (rplT) (Arthrobacter sp. (strain FB24)).